A 127-amino-acid chain; its full sequence is Small ribosomal subunit protein uS12 (127 aa).

Residues 11–20 (GRKPKKKKSK) are compositionally biased toward basic residues. Residues 11 to 30 (GRKPKKKKSKAPALQGNPQK) are disordered. Asp-89 is modified (3-methylthioaspartic acid). The segment at 105–127 (AGVEGRRQSRSKYGAKRPKDQKK) is disordered. The segment covering 112 to 127 (QSRSKYGAKRPKDQKK) has biased composition (basic residues).

It belongs to the universal ribosomal protein uS12 family. Part of the 30S ribosomal subunit. Contacts proteins S8 and S17. May interact with IF1 in the 30S initiation complex.

In terms of biological role, with S4 and S5 plays an important role in translational accuracy. Functionally, interacts with and stabilizes bases of the 16S rRNA that are involved in tRNA selection in the A site and with the mRNA backbone. Located at the interface of the 30S and 50S subunits, it traverses the body of the 30S subunit contacting proteins on the other side and probably holding the rRNA structure together. The combined cluster of proteins S8, S12 and S17 appears to hold together the shoulder and platform of the 30S subunit. This Thermotoga maritima (strain ATCC 43589 / DSM 3109 / JCM 10099 / NBRC 100826 / MSB8) protein is Small ribosomal subunit protein uS12.